Here is a 178-residue protein sequence, read N- to C-terminus: Large ribosomal subunit protein bL25 (178 aa).

This sequence belongs to the bacterial ribosomal protein bL25 family. CTC subfamily. As to quaternary structure, part of the 50S ribosomal subunit; part of the 5S rRNA/L5/L18/L25 subcomplex. Contacts the 5S rRNA. Binds to the 5S rRNA independently of L5 and L18.

This is one of the proteins that binds to the 5S RNA in the ribosome where it forms part of the central protuberance. The chain is Large ribosomal subunit protein bL25 from Helicobacter acinonychis (strain Sheeba).